The chain runs to 1102 residues: Phosphatidylinositol 4,5-bisphosphate 3-kinase catalytic subunit gamma isoform (1102 aa).

A PI3K-ABD domain is found at 34-141; the sequence is SMELIPIEFV…PGQIHVVQRH (108 aa). The PI3K-RBD domain maps to 217–309; the sequence is NNCVFIVIHR…GEEIHLVLDT (93 aa). The C2 PI3K-type domain occupies 357–521; it reads CDRKFRVKIR…NSMSISILLD (165 aa). The PIK helical domain maps to 541 to 723; it reads DRVRAEMPNQ…AVILEAYLRG (183 aa). One can recognise a PI3K/PI4K catalytic domain in the interval 797–1080; sequence VIEKCKVMAS…QIEVCRDKGW (284 aa). A G-loop region spans residues 803 to 809; that stretch reads VMASKKK. ATP contacts are provided by residues 829–838 and 864–872; these read GIIFKHGDDL and LLPYGCIST. Residues 943–951 are catalytic loop; the sequence is GIGDRHNDN. Position 961–969 (961–969) interacts with ATP; sequence FHIDFGHIL. Residues 962 to 988 form an activation loop region; that stretch reads HIDFGHILGNYKSFLGINKERVPFVLT. Thr-1024 bears the Phosphothreonine; by PKA mark. The residue at position 1101 (Ser-1101) is a Phosphoserine; by autocatalysis.

The protein belongs to the PI3/PI4-kinase family. In terms of assembly, heterodimer of a catalytic subunit PIK3CG and a PIK3R5 or PIK3R6 regulatory subunit. Interacts with GRK2 through the PIK helical domain. Interaction with GRK2 is required for targeting to agonist-occupied receptor. Interacts with PDE3B; regulates PDE3B activity and thereby cAMP levels in cells. Interacts with TPM2. Interacts with EPHA8; regulates integrin-mediated cell adhesion to substrate. Interacts with HRAS; the interaction is required for membrane recruitment and beta-gamma G protein dimer-dependent activation of the PI3K gamma complex PIK3CG:PIK3R6. Autophosphorylation at Ser-1101 has no effect on the phosphatidylinositol-4,5-bisphosphate 3-kinase activity.

The protein localises to the cytoplasm. The protein resides in the cell membrane. The enzyme catalyses a 1,2-diacyl-sn-glycero-3-phospho-(1D-myo-inositol-4,5-bisphosphate) + ATP = a 1,2-diacyl-sn-glycero-3-phospho-(1D-myo-inositol-3,4,5-trisphosphate) + ADP + H(+). The catalysed reaction is a 1,2-diacyl-sn-glycero-3-phospho-(1D-myo-inositol) + ATP = a 1,2-diacyl-sn-glycero-3-phospho-(1D-myo-inositol-3-phosphate) + ADP + H(+). It carries out the reaction a 1,2-diacyl-sn-glycero-3-phospho-(1D-myo-inositol 4-phosphate) + ATP = a 1,2-diacyl-sn-glycero-3-phospho-(1D-myo-inositol-3,4-bisphosphate) + ADP + H(+). It catalyses the reaction L-seryl-[protein] + ATP = O-phospho-L-seryl-[protein] + ADP + H(+). The protein operates within phospholipid metabolism; phosphatidylinositol phosphate biosynthesis. Its activity is regulated as follows. Activated by both the alpha and the beta-gamma G proteins following stimulation of G protein-coupled receptors (GPCRs). Activation by GPCRs is assisted by the regulatory subunits (PIK3R5 or PIK3R6) leading to the translocation from the cytosol to the plasma membrane and to kinase activation. When bound to PIK3R5 the PI3K activity of PIK3CG could be activated greater than 100-fold by the beta-gamma G proteins. Phosphoinositide-3-kinase (PI3K) that phosphorylates PtdIns(4,5)P2 (Phosphatidylinositol 4,5-bisphosphate) to generate phosphatidylinositol 3,4,5-trisphosphate (PIP3). PIP3 plays a key role by recruiting PH domain-containing proteins to the membrane, including AKT1 and PDPK1, activating signaling cascades involved in cell growth, survival, proliferation, motility and morphology. Links G-protein coupled receptor activation to PIP3 production. Involved in immune, inflammatory and allergic responses. Modulates leukocyte chemotaxis to inflammatory sites and in response to chemoattractant agents. May control leukocyte polarization and migration by regulating the spatial accumulation of PIP3 and by regulating the organization of F-actin formation and integrin-based adhesion at the leading edge. Controls motility of dendritic cells. Participates in T-lymphocyte migration. Regulates T-lymphocyte proliferation and cytokine production. Required for B-lymphocyte development and signaling. Together with other PI3Ks are involved in the oxidative burst produced by neutrophils in response to chemotactic agents. Together with PIK3CD regulate neutrophil extravasation. Together with PIK3CB promotes platelet aggregation and thrombosis. Regulates alpha-IIb/beta-3 integrins (ITGA2B/ ITGB3) adhesive function in platelets downstream of P2Y12 through a lipid kinase activity-independent mechanism. May have also a lipid kinase activity-dependent function in platelet aggregation. Involved in endothelial progenitor cell migration. Negative regulator of cardiac contractility. Modulates cardiac contractility by anchoring protein kinase A (PKA) and PDE3B activation, reducing cAMP levels. Regulates cardiac contractility also by promoting beta-adrenergic receptor internalization by binding to GRK2 and by non-muscle tropomyosin phosphorylation. Also has serine/threonine protein kinase activity: both lipid and protein kinase activities are required for beta-adrenergic receptor endocytosis. May also have a scaffolding role in modulating cardiac contractility. Contribute to cardiac hypertrophy under pathological stress. Through simultaneous binding of PDE3B to RAPGEF3 and PIK3R6 is assembled in a signaling complex in which the PI3K gamma complex is activated by RAPGEF3 and which is involved in angiogenesis. In neutrophils, participates in a phospholipase C-activating N-formyl peptide-activated GPCR (G protein-coupled receptor) signaling pathway downstream of RASGRP4-mediated Ras-activation, to promote neutrophil functional responses. This Sus scrofa (Pig) protein is Phosphatidylinositol 4,5-bisphosphate 3-kinase catalytic subunit gamma isoform (PIK3CG).